The primary structure comprises 347 residues: Dihydroorotase (347 aa).

The Zn(2+) site is built by His17 and His19. Substrate contacts are provided by residues 19-21 (HLR) and Asn45. Positions 103, 140, and 178 each coordinate Zn(2+). Lys103 carries the post-translational modification N6-carboxylysine. Residue His140 coordinates substrate. Residue Leu223 participates in substrate binding. Asp251 serves as a coordination point for Zn(2+). Asp251 is a catalytic residue. Residues His255 and Ala267 each coordinate substrate.

This sequence belongs to the metallo-dependent hydrolases superfamily. DHOase family. Class II DHOase subfamily. As to quaternary structure, homodimer. The cofactor is Zn(2+).

It carries out the reaction (S)-dihydroorotate + H2O = N-carbamoyl-L-aspartate + H(+). It participates in pyrimidine metabolism; UMP biosynthesis via de novo pathway; (S)-dihydroorotate from bicarbonate: step 3/3. Functionally, catalyzes the reversible cyclization of carbamoyl aspartate to dihydroorotate. This chain is Dihydroorotase, found in Pectobacterium atrosepticum (strain SCRI 1043 / ATCC BAA-672) (Erwinia carotovora subsp. atroseptica).